Reading from the N-terminus, the 345-residue chain is IGF-like family receptor 1 (345 aa).

The signal sequence occupies residues 1-20; it reads MGPSWLLWTVAVAVLLLTRA. Residues 21–163 lie on the Extracellular side of the membrane; sequence ASMEASSFCG…SSRPGFVSAS (143 aa). N-linked (GlcNAc...) asparagine glycosylation occurs at asparagine 87. The segment at 106-149 is disordered; the sequence is VESPGRTHKQCRKKPVPPKDVCPLKPEDAGASSSPGRWSLGQTT. Residues 111 to 121 are compositionally biased toward basic residues; sequence RTHKQCRKKPV. Residues 136 to 149 are compositionally biased toward polar residues; sequence ASSSPGRWSLGQTT. A helical membrane pass occupies residues 164-184; sequence VLPLAVLPLLLVLLLILAVVL. Over 185-345 the chain is Cytoplasmic; it reads LSLFKRKVRS…DALQVLSKLG (161 aa).

As to expression, ubiquitously expressed with higher expression in lymph node. Highly expressed in T-cells and monocytes.

It is found in the cell membrane. Its function is as follows. Probable cell membrane receptor for the IGF-like family protein IGFL. The protein is IGF-like family receptor 1 (Igflr1) of Mus musculus (Mouse).